The sequence spans 276 residues: Cholesterol 25-hydroxylase-like protein 1, member 2 (276 aa).

N-linked (GlcNAc...) asparagine glycosylation occurs at Asn-30. 3 helical membrane passes run 39 to 59 (LFPV…YLSC), 90 to 110 (GVTL…QWMW), and 126 to 146 (LVGG…IWHF). The Fatty acid hydroxylase domain maps to 134-265 (LLLFDLQYFI…FSHWDKMFGT (132 aa)). The Histidine box-1 motif lies at 144–148 (WHFLH). Residues 159-163 (HAIHH) carry the Histidine box-2 motif. The N-linked (GlcNAc...) asparagine glycan is linked to Asn-164. The next 2 helical transmembrane spans lie at 175–195 (CLGG…PVLL) and 199–219 (LLTT…DHCG). The short motif at 240–246 (KHDVHHQ) is the Histidine box-3 element.

It belongs to the sterol desaturase family. Fe cation serves as cofactor.

The protein resides in the endoplasmic reticulum membrane. In terms of biological role, may catalyze the formation of 25-hydroxycholesterol from cholesterol. The sequence is that of Cholesterol 25-hydroxylase-like protein 1, member 2 from Danio rerio (Zebrafish).